Reading from the N-terminus, the 36-residue chain is Mating hormone A-factor 1 (36 aa).

A propeptide spanning residues 1-21 is cleaved from the precursor; that stretch reads MQPSTATAAPKEKTSSEKKDN. C33 is subject to Cysteine methyl ester. C33 carries S-farnesyl cysteine lipidation. The propeptide at 34-36 is removed in mature form; sequence VIA.

Its subcellular location is the cell membrane. Functionally, the active factor is excreted into the culture medium by haploid cells of the A mating type and acts on cells of the opposite mating type (type alpha). It mediates the conjugation process between the two types by inhibiting the initiation of DNA synthesis in type alpha cells and synchronizing them with type A. The sequence is that of Mating hormone A-factor 1 (MFA1) from Saccharomyces cerevisiae (strain ATCC 204508 / S288c) (Baker's yeast).